The sequence spans 545 residues: Probable protein kinase UbiB (545 aa).

Residues 123–501 enclose the Protein kinase domain; the sequence is DFDIVPLASA…RVRQHQSHYL (379 aa). ATP is bound by residues 129-137 and K152; that span reads LASASIAQV. Catalysis depends on D287, which acts as the Proton acceptor. Helical transmembrane passes span 498–518 and 521–541; these read SHYL…VVLS and EWDG…LVGW.

The protein belongs to the ABC1 family. UbiB subfamily.

It localises to the cell inner membrane. It participates in cofactor biosynthesis; ubiquinone biosynthesis [regulation]. Its function is as follows. Is probably a protein kinase regulator of UbiI activity which is involved in aerobic coenzyme Q (ubiquinone) biosynthesis. The sequence is that of Probable protein kinase UbiB from Erwinia tasmaniensis (strain DSM 17950 / CFBP 7177 / CIP 109463 / NCPPB 4357 / Et1/99).